The primary structure comprises 98 residues: Large ribosomal subunit protein eL14 (98 aa).

The protein belongs to the eukaryotic ribosomal protein eL14 family.

This Hyperthermus butylicus (strain DSM 5456 / JCM 9403 / PLM1-5) protein is Large ribosomal subunit protein eL14.